Consider the following 168-residue polypeptide: Ubiquitin-fold modifier-conjugating enzyme 1 (168 aa).

Cys-119 acts as the Glycyl thioester intermediate in catalysis.

It belongs to the ubiquitin-conjugating enzyme family. UFC1 subfamily.

E2-like enzyme which forms an intermediate with UFM1 via a thioester linkage. The polypeptide is Ubiquitin-fold modifier-conjugating enzyme 1 (Drosophila grimshawi (Hawaiian fruit fly)).